Reading from the N-terminus, the 467-residue chain is ATP synthase subunit beta (467 aa).

156 to 163 (GGAGVGKT) provides a ligand contact to ATP.

Belongs to the ATPase alpha/beta chains family. As to quaternary structure, F-type ATPases have 2 components, CF(1) - the catalytic core - and CF(0) - the membrane proton channel. CF(1) has five subunits: alpha(3), beta(3), gamma(1), delta(1), epsilon(1). CF(0) has three main subunits: a(1), b(2) and c(9-12). The alpha and beta chains form an alternating ring which encloses part of the gamma chain. CF(1) is attached to CF(0) by a central stalk formed by the gamma and epsilon chains, while a peripheral stalk is formed by the delta and b chains.

The protein localises to the cell inner membrane. The catalysed reaction is ATP + H2O + 4 H(+)(in) = ADP + phosphate + 5 H(+)(out). Functionally, produces ATP from ADP in the presence of a proton gradient across the membrane. The catalytic sites are hosted primarily by the beta subunits. The protein is ATP synthase subunit beta of Cupriavidus taiwanensis (strain DSM 17343 / BCRC 17206 / CCUG 44338 / CIP 107171 / LMG 19424 / R1) (Ralstonia taiwanensis (strain LMG 19424)).